We begin with the raw amino-acid sequence, 757 residues long: Centrosomal protein of 68 kDa (757 aa).

Basic and acidic residues-rich tracts occupy residues 1–17 (MALG…EDTK) and 86–96 (ANREPVAERSE). 6 disordered regions span residues 1–47 (MALG…RLEA), 67–158 (WIGT…PSLA), 192–259 (QPSS…GGDA), 311–480 (PGPQ…ESDD), 509–551 (PTGD…SGDP), and 597–618 (LDRW…GGEQ). Positions 125–144 (LSSSEEFPQTLSLPRTTTIC) are enriched in polar residues. Low complexity-rich tracts occupy residues 192 to 206 (QPSS…TGSS) and 224 to 240 (VSSS…SSVV). Position 332 is a phosphoserine; by PLK1 (S332). Positions 339 to 355 (FSVSPASTLKSPTNVSP) are enriched in polar residues. Composition is skewed to basic and acidic residues over residues 405–432 (GSRD…KHLD) and 439–456 (RTRD…EKRT). Positions 457-467 (SQSARRPTCTE) are enriched in polar residues. 2 positions are modified to phosphoserine: S472 and S478. Low complexity predominate over residues 524–543 (SDGPASFPSSSSQSQLPPGA).

As to quaternary structure, interacts with CNTLN; the interaction recruits CEP68 to the centrosome. Interacts with the SCF(FBXW11) complex which contains SKP1, CUL1 and FBXW11; the interaction is probably mediated by FBXW11 and the complex also contains CDK5RAP2 and PCNT. Also interacts with F-box protein BTRC. Interacts with serine/threonine-protein kinase PLK1; the interaction leads to phosphorylation of CEP68 and its subsequent degradation. Interacts with NEK2; the interaction leads to phosphorylation of CEP68. In terms of processing, phosphorylation by PLK1 is required for binding to BTRC in prometaphase. Phosphorylated directly or indirectly by NEK2. NEK2-mediated phosphorylation promotes CEP68 dissociation from the centrosome and its degradation at the onset of mitosis. Ubiquitinated and targeted for proteasomal degradation in early mitosis by the SCF(BTRC) and/or SCF(FBXW11) E3 ubiquitin-protein ligase complexes. Degradation is complete by prometaphase and is required for removal of CDK5RAP2 from the peripheral pericentriolar material and subsequent centriole separation.

It is found in the cytoplasm. The protein localises to the cytoskeleton. Its subcellular location is the microtubule organizing center. The protein resides in the centrosome. Functionally, involved in maintenance of centrosome cohesion, probably as part of a linker structure which prevents centrosome splitting. Required for localization of CDK5RAP2 to the centrosome during interphase. Contributes to CROCC/rootletin filament formation. This is Centrosomal protein of 68 kDa (CEP68) from Homo sapiens (Human).